Reading from the N-terminus, the 90-residue chain is Probable Fe(2+)-trafficking protein (90 aa).

It belongs to the Fe(2+)-trafficking protein family.

In terms of biological role, could be a mediator in iron transactions between iron acquisition and iron-requiring processes, such as synthesis and/or repair of Fe-S clusters in biosynthetic enzymes. In Delftia acidovorans (strain DSM 14801 / SPH-1), this protein is Probable Fe(2+)-trafficking protein.